The primary structure comprises 141 residues: Endoribonuclease YbeY (141 aa).

Zn(2+) contacts are provided by H105, H109, and D115.

This sequence belongs to the endoribonuclease YbeY family. Requires Zn(2+) as cofactor.

It is found in the cytoplasm. Its function is as follows. Single strand-specific metallo-endoribonuclease involved in late-stage 70S ribosome quality control and in maturation of the 3' terminus of the 16S rRNA. This chain is Endoribonuclease YbeY, found in Chlorobaculum parvum (strain DSM 263 / NCIMB 8327) (Chlorobium vibrioforme subsp. thiosulfatophilum).